Consider the following 134-residue polypeptide: DNA-binding protein inhibitor ID-2 (134 aa).

Phosphoserine is present on residues Ser14 and Ser25. One can recognise a bHLH domain in the interval 23–75 (SRSKTPVDDPMSLLYNMNDCYSKLKELVPSIPQNKKVSKMEILQHVIDYILDL). A Nuclear export signal motif is present at residues 106 to 115 (LNTDISILSL).

Interacts with GATA4 and NKX2-5. Interacts with NR0B2. Interacts with CLOCK and BMAL1. Interacts with IFI204. Interacts with NEDD9/HEF1. Interacts with ASB4; this interaction promotes ID2 proteasomal degradation. In terms of processing, ubiquitinated in a ASB4-depedent manner, leading to proteasomal degradation. Phosphorylated in vitro by CDK1, PKA and PKC.

The protein localises to the cytoplasm. Its subcellular location is the nucleus. Transcriptional regulator (lacking a basic DNA binding domain) which negatively regulates the basic helix-loop-helix (bHLH) transcription factors by forming heterodimers and inhibiting their DNA binding and transcriptional activity. Implicated in regulating a variety of cellular processes, including cellular growth, senescence, differentiation, apoptosis, angiogenesis, and neoplastic transformation. Inhibits skeletal muscle and cardiac myocyte differentiation. Regulates the circadian clock by repressing the transcriptional activator activity of the CLOCK-BMAL1 heterodimer. Restricts the CLOCK and BMAL1 localization to the cytoplasm. Plays a role in both the input and output pathways of the circadian clock: in the input component, is involved in modulating the magnitude of photic entrainment and in the output component, contributes to the regulation of a variety of liver clock-controlled genes involved in lipid metabolism. The polypeptide is DNA-binding protein inhibitor ID-2 (ID2) (Sus scrofa (Pig)).